A 115-amino-acid chain; its full sequence is Large ribosomal subunit protein bL20 (115 aa).

Belongs to the bacterial ribosomal protein bL20 family.

Functionally, binds directly to 23S ribosomal RNA and is necessary for the in vitro assembly process of the 50S ribosomal subunit. It is not involved in the protein synthesizing functions of that subunit. The sequence is that of Large ribosomal subunit protein bL20 from Borrelia garinii subsp. bavariensis (strain ATCC BAA-2496 / DSM 23469 / PBi) (Borreliella bavariensis).